Consider the following 364-residue polypeptide: G-protein coupled receptor 4 (364 aa).

Topologically, residues 1–8 are extracellular; that stretch reads MCNVSQDS. N-linked (GlcNAc...) asparagine glycosylation occurs at Asn-3. Residues 9-45 traverse the membrane as a helical segment; it reads CNIDSRLDSLFPPTLYIFVMVIGFPTNCLSLWAAFVQ. Intrachain disulfides connect Cys-9–Cys-258 and Cys-90–Cys-168. Residues 46-49 lie on the Cytoplasmic side of the membrane; the sequence is VRQK. The chain crosses the membrane as a helical span at residues 50 to 80; that stretch reads NELGVYLLNLSISDLLYIATLPPWVNYFLHQ. The Extracellular portion of the chain corresponds to 81–85; sequence DNWIH. A helical transmembrane segment spans residues 86-121; the sequence is GPESCKLFGFILYTNIYISIGFLSCISVDRYLAVAH. The Cytoplasmic segment spans residues 122 to 129; it reads PLKFAKVR. The helical transmembrane segment at 130–156 threads the bilayer; sequence RVKTAAVVSAVVWAIEIGANSAPLFHN. Residues 157 to 172 are Extracellular-facing; that stretch reads ELFEDRFNHTFCFEKY. The tract at residues 157-172 is extracellular loop 2 (ECL2); the sequence is ELFEDRFNHTFCFEKY. An N-linked (GlcNAc...) asparagine glycan is attached at Asn-164. A helical transmembrane segment spans residues 173-210; sequence PMEDWVAQMNLYRVFVGFLFPWVLMLFCYQGILRAVKT. Over 211–214 the chain is Cytoplasmic; that stretch reads NVST. Residues 215-250 traverse the membrane as a helical segment; that stretch reads EREEKAKIKRLALSLIAILLFCFAPYHLILLSRSVV. The Extracellular portion of the chain corresponds to 251–260; it reads YLGQPCDCTF. A helical membrane pass occupies residues 261 to 289; it reads EENIFTAYHVSLALTSLNCVADPILYCLA. The Cytoplasmic portion of the chain corresponds to 290-364; that stretch reads NEGARSEVTR…RVRRRRDCKC (75 aa).

Belongs to the G-protein coupled receptor 1 family.

Its subcellular location is the cell membrane. With respect to regulation, activated by a network of residues that connects an extracellular-facing cavity to Glu-145, a conserved charged residue buried in the transmembrane core of the receptor. Protonation likely drives conformational changes in extracellular loop 2 (ECL2), which stabilizes movement of transmembrane 3 (TM3) and a series of rearrangements that connect the extracellular-facing cavity to Glu-145, a residue only conserved in proton-sensing G-protein coupled receptors. Proton-sensing G-protein coupled receptor activated by extracellular pH, which is required to monitor pH changes and generate adaptive reactions. Ligand binding causes a conformation change that triggers signaling via guanine nucleotide-binding proteins (G proteins) and modulates the activity of downstream effectors, such as adenylate cyclase. The protein is G-protein coupled receptor 4 of Callorhinchus milii (Ghost shark).